The following is a 95-amino-acid chain: Small ribosomal subunit protein bS6 (95 aa).

Belongs to the bacterial ribosomal protein bS6 family.

In terms of biological role, binds together with bS18 to 16S ribosomal RNA. This is Small ribosomal subunit protein bS6 from Corynebacterium urealyticum (strain ATCC 43042 / DSM 7109).